The following is a 598-amino-acid chain: Aspartate--tRNA(Asp/Asn) ligase (598 aa).

Glu-172 contributes to the L-aspartate binding site. The segment at 196–199 is aspartate; sequence QLFK. Arg-218 is an L-aspartate binding site. Residues 218-220 and Gln-227 each bind ATP; that span reads RDE. L-aspartate is bound at residue His-454. Residue Glu-488 participates in ATP binding. Arg-495 lines the L-aspartate pocket. An ATP-binding site is contributed by 540 to 543; it reads GLDR.

It belongs to the class-II aminoacyl-tRNA synthetase family. Type 1 subfamily. As to quaternary structure, homodimer.

The protein resides in the cytoplasm. The catalysed reaction is tRNA(Asx) + L-aspartate + ATP = L-aspartyl-tRNA(Asx) + AMP + diphosphate. Its function is as follows. Aspartyl-tRNA synthetase with relaxed tRNA specificity since it is able to aspartylate not only its cognate tRNA(Asp) but also tRNA(Asn). Reaction proceeds in two steps: L-aspartate is first activated by ATP to form Asp-AMP and then transferred to the acceptor end of tRNA(Asp/Asn). This chain is Aspartate--tRNA(Asp/Asn) ligase, found in Leptothrix cholodnii (strain ATCC 51168 / LMG 8142 / SP-6) (Leptothrix discophora (strain SP-6)).